A 199-amino-acid chain; its full sequence is FMN-dependent NADH:quinone oxidoreductase 2 (199 aa).

Residues Ser-10, 17 to 19 (SDS), and 135 to 138 (TKGG) each bind FMN.

The protein belongs to the azoreductase type 1 family. In terms of assembly, homodimer. It depends on FMN as a cofactor.

It catalyses the reaction 2 a quinone + NADH + H(+) = 2 a 1,4-benzosemiquinone + NAD(+). It carries out the reaction N,N-dimethyl-1,4-phenylenediamine + anthranilate + 2 NAD(+) = 2-(4-dimethylaminophenyl)diazenylbenzoate + 2 NADH + 2 H(+). Functionally, quinone reductase that provides resistance to thiol-specific stress caused by electrophilic quinones. Also exhibits azoreductase activity. Catalyzes the reductive cleavage of the azo bond in aromatic azo compounds to the corresponding amines. In Mesoplasma florum (strain ATCC 33453 / NBRC 100688 / NCTC 11704 / L1) (Acholeplasma florum), this protein is FMN-dependent NADH:quinone oxidoreductase 2.